We begin with the raw amino-acid sequence, 495 residues long: YTH domain-containing protein ECT3 (495 aa).

Residues 261-398 (AKFYVIKSYS…EQGIKVIKIF (138 aa)) enclose the YTH domain. RNA is bound by residues 267-269 (KSY), Asp-273, 283-284 (WS), Asn-316, Trp-340, Trp-345, and Trp-353.

Expressed in the shoot apex, at the sites of leaf formation, and in emerging leaves.

The protein resides in the cytoplasm. Functionally, specifically recognizes and binds N6-methyladenosine (m6A)-containing RNAs, and regulates mRNA stability. M6A is a modification present at internal sites of mRNAs and some non-coding RNAs and plays a role in mRNA stability and processing. Required for the correct timing of leaf formation and normal leaf morphology. Required for proper trichome branching and morphology. Functions redundantly with ECT2. The chain is YTH domain-containing protein ECT3 from Arabidopsis thaliana (Mouse-ear cress).